Reading from the N-terminus, the 1044-residue chain is Elongation factor 3B (1044 aa).

Residue Ser2 is modified to N-acetylserine. The HEAT 1 repeat unit spans residues 5 to 42 (QQSITVLEELFRKLETATSETREGISSELSSFLNGNII). Ile42, His44, and Ser83 together coordinate ADP. HEAT repeat units lie at residues 86 to 123 (PYIV…AVNP), 124 to 162 (VAVK…AAKE), 166 to 203 (LRMP…TVDN), 205 to 241 (DIER…EVTP), 242 to 279 (ATLS…LVED), and 285 to 323 (PFLG…VGNV). Residues Lys187 and Lys196 each carry the N6,N6,N6-trimethyllysine modification. Thr392, His396, and Glu397 together coordinate ADP. 2 consecutive ABC transporter domains span residues 426 to 641 (DEGE…YYEL) and 667 to 993 (VKVS…KKEE). Asn703 contributes to the ADP binding site. Lys789 carries the post-translational modification N6,N6,N6-trimethyllysine. Residues Glu922, Asn925, and His951 each coordinate ADP. Thr972 carries the post-translational modification Phosphothreonine. Ser974 carries the phosphoserine modification. The disordered stretch occupies residues 975–1044 (GHNWVAGQGA…DEYVSSDEDF (70 aa)). Positions 987–999 (RIEKKEEEGDKFD) are enriched in basic and acidic residues. The segment covering 1020-1031 (RKKKKERMKKKK) has biased composition (basic residues). Phosphoserine occurs at positions 1039 and 1040.

Belongs to the ABC transporter superfamily. ABCF family. EF3 subfamily. As to quaternary structure, monomer.

The protein localises to the cytoplasm. The catalysed reaction is ATP + H2O = ADP + phosphate + H(+). Its pathway is protein biosynthesis; polypeptide chain elongation. In terms of biological role, ribosome-dependent ATPase that promotes the translation of proteins required for detoxification of reactive oxygen species. Required for the ATP-dependent release of deacylated tRNA from the ribosomal E-site during protein biosynthesis. Stimulates the eEF1A-dependent binding of aminoacyl-tRNA to the ribosomal A-site, which has reduced affinity for tRNA as long as the E-site is occupied. Assists translation termination by stimulating the release of nascent protein from the ribosome by release factors. The sequence is that of Elongation factor 3B from Saccharomyces cerevisiae (strain ATCC 204508 / S288c) (Baker's yeast).